A 272-amino-acid polypeptide reads, in one-letter code: Ribonuclease HII (272 aa).

Residues 30–221 (GPVAGVDEVG…VRRAAEATGV (192 aa)) enclose the RNase H type-2 domain. 3 residues coordinate a divalent metal cation: D36, E37, and D130.

It belongs to the RNase HII family. Requires Mn(2+) as cofactor. The cofactor is Mg(2+).

It localises to the cytoplasm. It catalyses the reaction Endonucleolytic cleavage to 5'-phosphomonoester.. Its function is as follows. Endonuclease that specifically degrades the RNA of RNA-DNA hybrids. This is Ribonuclease HII from Mycolicibacterium smegmatis (strain ATCC 700084 / mc(2)155) (Mycobacterium smegmatis).